The chain runs to 656 residues: Heparan-alpha-glucosaminide N-acetyltransferase (656 aa).

Residues 1 to 31 (MTGGSSSRRRRAEERSSAAGTERNSRREAVG) are disordered. Over 1–185 (MTGGSSSRRR…IIVNENPVDS (185 aa)) the chain is Lumenal, vesicle. N-linked (GlcNAc...) asparagine glycosylation is found at Asn137 and Asn157. An intrachain disulfide couples Cys146 to Cys455. The helical transmembrane segment at 186 to 206 (NLPVSIAFLVGLALIVAVSLL) threads the bilayer. Topologically, residues 207–268 (RLLLSLDDVN…NRLRCVDTFR (62 aa)) are cytoplasmic. The segment at 234-253 (SELGSPSRADPLSADYQPET) is disordered. A phosphoserine mark is found at Ser238 and Ser240. Tyr249 carries the phosphotyrosine modification. Residues 269-289 (GLALVLMVFVNYGGGKYWYFK) traverse the membrane as a helical segment. His290 is a catalytic residue. Residues 290-295 (HSSWNG) lie on the Lumenal, vesicle side of the membrane. The helical transmembrane segment at 296-316 (LTVADLVFPWFVFIMGTSIFL) threads the bilayer. Over 317–338 (SMTSILQRGCSKLKLLGKIVWR) the chain is Cytoplasmic. Residues 339–359 (SFLLICIGVIIVNPNYCLGPL) form a helical membrane-spanning segment. The Lumenal, vesicle portion of the chain corresponds to 360-367 (SWDKVRIP). Residues 368 to 388 (GVLQRLGVTYFVVAVLEFFFW) traverse the membrane as a helical segment. The Cytoplasmic segment spans residues 389-413 (KPVPDSCTLESSCFSLRDITSSWPQ). A helical membrane pass occupies residues 414–434 (WLTILTLESIWLALTFFLPVP). Residues 435–493 (GCPTGYLGPGGIGDLGKYPHCTGGAAGYIDRLLLGDNHLYQHPSSTVLYHTEVAYDPEG) are Lumenal, vesicle-facing. A helical transmembrane segment spans residues 494–514 (VLGTINSIVMAFLGVQAGKIL). Over 515–522 (VYYKDQTK) the chain is Cytoplasmic. A helical membrane pass occupies residues 523–543 (AILTRFAAWCCILGLISIVLT). Topologically, residues 544–557 (KVSANEGFIPINKN) are lumenal, vesicle. A helical membrane pass occupies residues 558–578 (LWSISYVTTLSCFAFFILLIL). The Cytoplasmic segment spans residues 579–585 (YPVVDVK). A helical membrane pass occupies residues 586–606 (GLWTGTPFFYPGMNSILVYVG). The Lumenal, vesicle portion of the chain corresponds to 607 to 627 (HEVLENYFPFQWKLADEQSHK). Residues 628–648 (EHLIQNIVATALWVLIAYVLY) form a helical membrane-spanning segment. The segment at 641–656 (VLIAYVLYKKKLFWKI) is lysosomal targeting region. The Cytoplasmic segment spans residues 649–656 (KKKLFWKI).

As to quaternary structure, homooligomer. Homooligomerization is necessary for enzyme activity. In terms of processing, undergoes intralysosomal proteolytic cleavage; occurs within the end of the first and/or the beginning of the second luminal domain and is essential for the activation of the enzyme. Glycosylated. As to expression, expressed in the retina.

Its subcellular location is the lysosome membrane. The enzyme catalyses alpha-D-glucosaminyl-[heparan sulfate](n) + acetyl-CoA = N-acetyl-alpha-D-glucosaminyl-[heparan sulfate](n) + CoA + H(+). Its function is as follows. Lysosomal acetyltransferase that acetylates the non-reducing terminal alpha-glucosamine residue of intralysosomal heparin or heparan sulfate, converting it into a substrate for luminal alpha-N-acetyl glucosaminidase. This Mus musculus (Mouse) protein is Heparan-alpha-glucosaminide N-acetyltransferase (Hgsnat).